A 69-amino-acid polypeptide reads, in one-letter code: MSVLTSLLLRGLTGSARRLPVPRAKVHSMPPEEELGIMEKAIGLTFCFVSLFLPAGWILSHLEDYKRPE.

A mitochondrion-targeting transit peptide spans 1–25 (MSVLTSLLLRGLTGSARRLPVPRAK). Over 26 to 36 (VHSMPPEEELG) the chain is Mitochondrial matrix. The chain crosses the membrane as a helical span at residues 37-60 (IMEKAIGLTFCFVSLFLPAGWILS). Topologically, residues 61–69 (HLEDYKRPE) are mitochondrial intermembrane.

The protein belongs to the cytochrome c oxidase VIII family. In terms of assembly, component of the cytochrome c oxidase (complex IV, CIV), a multisubunit enzyme composed of 14 subunits. The complex is composed of a catalytic core of 3 subunits MT-CO1, MT-CO2 and MT-CO3, encoded in the mitochondrial DNA, and 11 supernumerary subunits COX4I, COX5A, COX5B, COX6A, COX6B, COX6C, COX7A, COX7B, COX7C, COX8 and NDUFA4, which are encoded in the nuclear genome. The complex exists as a monomer or a dimer and forms supercomplexes (SCs) in the inner mitochondrial membrane with NADH-ubiquinone oxidoreductase (complex I, CI) and ubiquinol-cytochrome c oxidoreductase (cytochrome b-c1 complex, complex III, CIII), resulting in different assemblies (supercomplex SCI(1)III(2)IV(1) and megacomplex MCI(2)III(2)IV(2)). Post-translationally, in response to mitochondrial stress, the precursor protein is ubiquitinated by the SIFI complex in the cytoplasm before mitochondrial import, leading to its degradation. Within the SIFI complex, UBR4 initiates ubiquitin chain that are further elongated or branched by KCMF1.

It is found in the mitochondrion inner membrane. It participates in energy metabolism; oxidative phosphorylation. In terms of biological role, component of the cytochrome c oxidase, the last enzyme in the mitochondrial electron transport chain which drives oxidative phosphorylation. The respiratory chain contains 3 multisubunit complexes succinate dehydrogenase (complex II, CII), ubiquinol-cytochrome c oxidoreductase (cytochrome b-c1 complex, complex III, CIII) and cytochrome c oxidase (complex IV, CIV), that cooperate to transfer electrons derived from NADH and succinate to molecular oxygen, creating an electrochemical gradient over the inner membrane that drives transmembrane transport and the ATP synthase. Cytochrome c oxidase is the component of the respiratory chain that catalyzes the reduction of oxygen to water. Electrons originating from reduced cytochrome c in the intermembrane space (IMS) are transferred via the dinuclear copper A center (CU(A)) of subunit 2 and heme A of subunit 1 to the active site in subunit 1, a binuclear center (BNC) formed by heme A3 and copper B (CU(B)). The BNC reduces molecular oxygen to 2 water molecules using 4 electrons from cytochrome c in the IMS and 4 protons from the mitochondrial matrix. The polypeptide is Cytochrome c oxidase subunit 8A, mitochondrial (COX8A) (Macaca fascicularis (Crab-eating macaque)).